Consider the following 486-residue polypeptide: N-succinylglutamate 5-semialdehyde dehydrogenase (486 aa).

220-225 (GSSRTG) provides a ligand contact to NAD(+). Active-site residues include Glu-243 and Cys-277.

This sequence belongs to the aldehyde dehydrogenase family. AstD subfamily.

The catalysed reaction is N-succinyl-L-glutamate 5-semialdehyde + NAD(+) + H2O = N-succinyl-L-glutamate + NADH + 2 H(+). It participates in amino-acid degradation; L-arginine degradation via AST pathway; L-glutamate and succinate from L-arginine: step 4/5. In terms of biological role, catalyzes the NAD-dependent reduction of succinylglutamate semialdehyde into succinylglutamate. The polypeptide is N-succinylglutamate 5-semialdehyde dehydrogenase (Shewanella woodyi (strain ATCC 51908 / MS32)).